The primary structure comprises 290 residues: Phosphonopyruvate hydrolase (290 aa).

40–44 (WGSGF) serves as a coordination point for substrate. Asp-54 functions as the Nucleophile in the catalytic mechanism. Asp-81 is a Mg(2+) binding site. Substrate contacts are provided by Arg-155, His-186, and Arg-188.

In terms of assembly, homodimer. Homotetramer. It depends on Co(2+) as a cofactor. Requires Mg(2+) as cofactor. Mn(2+) is required as a cofactor.

It carries out the reaction 3-phosphonopyruvate + H2O = pyruvate + phosphate + H(+). Partially inhibited by EDTA. Activity is restored by Co(2+), and to a lesser extent by Ni(2+) and Mg(2+). Unaffected by Cs(2+) and Ca(2+). Activity is reduced by Mn(2+) and Cu(2+). Hydrolyzes phosphonopyruvate. Not active towards phosphoenolpyruvate, glycerophosphate, phospho-L-serine or phosphoglycolic acid. In Variovorax sp. (strain Pal2), this protein is Phosphonopyruvate hydrolase.